The following is a 190-amino-acid chain: Potassium-transporting ATPase KdpC subunit (190 aa).

Residues 10–30 traverse the membrane as a helical segment; the sequence is TFLFLLLITGGVYPLLTTALG.

This sequence belongs to the KdpC family. The system is composed of three essential subunits: KdpA, KdpB and KdpC.

Its subcellular location is the cell inner membrane. Its function is as follows. Part of the high-affinity ATP-driven potassium transport (or Kdp) system, which catalyzes the hydrolysis of ATP coupled with the electrogenic transport of potassium into the cytoplasm. This subunit acts as a catalytic chaperone that increases the ATP-binding affinity of the ATP-hydrolyzing subunit KdpB by the formation of a transient KdpB/KdpC/ATP ternary complex. This Escherichia coli O45:K1 (strain S88 / ExPEC) protein is Potassium-transporting ATPase KdpC subunit.